Consider the following 467-residue polypeptide: Putative ankyrin repeat protein R911 (467 aa).

14 ANK repeats span residues 38–70, 79–108, 109–138, 140–168, 170–198, 199–228, 229–258, 260–288, 289–318, 320–348, 350–378, 379–408, 410–438, and 440–467; these read IKTD…PIIV, TLNK…DIRA, GNDY…DIRA, NDYA…NIRA, NDHA…DIRS, DNDY…NIRS, DNDY…DIKS, NDYA…NIRV, NNNY…DIIA, NNFA…DIKS, NDYA…DIRV, ENDY…DIRS, NDYA…DIKA, and DDYA…AVLS.

The sequence is that of Putative ankyrin repeat protein R911 from Acanthamoeba polyphaga mimivirus (APMV).